The chain runs to 765 residues: Periplasmic beta-glucosidase (765 aa).

The first 20 residues, 1–20 (MKWLCSVGVAVSLAMQPALA), serve as a signal peptide directing secretion. Asp-287 is an active-site residue.

The protein belongs to the glycosyl hydrolase 3 family.

The protein resides in the periplasm. It catalyses the reaction Hydrolysis of terminal, non-reducing beta-D-glucosyl residues with release of beta-D-glucose.. This chain is Periplasmic beta-glucosidase (bglX), found in Salmonella typhimurium (strain LT2 / SGSC1412 / ATCC 700720).